The chain runs to 353 residues: UPF0283 membrane protein YcjF (353 aa).

Residues 1 to 19 (MSEPLKPRIDFAEPLKEEP) show a composition bias toward basic and acidic residues. Positions 1 to 35 (MSEPLKPRIDFAEPLKEEPTSAFKAQQTFSEAESR) are disordered. 3 consecutive transmembrane segments (helical) span residues 70 to 90 (MVMG…VQWT), 100 to 120 (VALG…GSVV), and 213 to 233 (ESTL…FIAW).

The protein belongs to the UPF0283 family.

It is found in the cell inner membrane. This Salmonella gallinarum (strain 287/91 / NCTC 13346) protein is UPF0283 membrane protein YcjF.